Reading from the N-terminus, the 208-residue chain is Uracil phosphoribosyltransferase (208 aa).

5-phospho-alpha-D-ribose 1-diphosphate-binding positions include R78, R103, and 130 to 138; that span reads DPMLATGGS. Uracil-binding positions include I193 and 198 to 200; that span reads GDA. 5-phospho-alpha-D-ribose 1-diphosphate is bound at residue D199.

The protein belongs to the UPRTase family. The cofactor is Mg(2+).

The catalysed reaction is UMP + diphosphate = 5-phospho-alpha-D-ribose 1-diphosphate + uracil. It participates in pyrimidine metabolism; UMP biosynthesis via salvage pathway; UMP from uracil: step 1/1. Its activity is regulated as follows. Allosterically activated by GTP. Its function is as follows. Catalyzes the conversion of uracil and 5-phospho-alpha-D-ribose 1-diphosphate (PRPP) to UMP and diphosphate. The chain is Uracil phosphoribosyltransferase from Shewanella sp. (strain ANA-3).